We begin with the raw amino-acid sequence, 152 residues long: UPF0266 membrane protein YobD (152 aa).

3 helical membrane-spanning segments follow: residues 6–26 (LVLI…QFIM), 45–65 (VDSV…VTSH), and 67–87 (AQMT…IFWI).

Belongs to the UPF0266 family.

Its subcellular location is the cell inner membrane. This is UPF0266 membrane protein YobD from Salmonella newport (strain SL254).